A 259-amino-acid chain; its full sequence is Deoxyribose-phosphate aldolase (259 aa).

The active-site Proton donor/acceptor is the D102. The active-site Schiff-base intermediate with acetaldehyde is K167. The active-site Proton donor/acceptor is the K201.

This sequence belongs to the DeoC/FbaB aldolase family. DeoC type 2 subfamily.

The protein resides in the cytoplasm. The catalysed reaction is 2-deoxy-D-ribose 5-phosphate = D-glyceraldehyde 3-phosphate + acetaldehyde. It participates in carbohydrate degradation; 2-deoxy-D-ribose 1-phosphate degradation; D-glyceraldehyde 3-phosphate and acetaldehyde from 2-deoxy-alpha-D-ribose 1-phosphate: step 2/2. Functionally, catalyzes a reversible aldol reaction between acetaldehyde and D-glyceraldehyde 3-phosphate to generate 2-deoxy-D-ribose 5-phosphate. The polypeptide is Deoxyribose-phosphate aldolase (Escherichia fergusonii (strain ATCC 35469 / DSM 13698 / CCUG 18766 / IAM 14443 / JCM 21226 / LMG 7866 / NBRC 102419 / NCTC 12128 / CDC 0568-73)).